Here is a 441-residue protein sequence, read N- to C-terminus: Maltose-6'-phosphate glucosidase (441 aa).

An NAD(+)-binding site is contributed by 4–70 (FSILIAGGGS…PQIKFSYSTN (67 aa)). Substrate is bound by residues Arg-93 and Asn-147. Cys-169 is a Mn(2+) binding site. Asp-170 functions as the Proton donor in the catalytic mechanism. Residue His-200 coordinates Mn(2+). The active-site Proton acceptor is Tyr-264. Arg-284 serves as a coordination point for substrate.

This sequence belongs to the glycosyl hydrolase 4 family. Homotetramer. NAD(+) serves as cofactor. The cofactor is Mn(2+). Fe(2+) is required as a cofactor. Requires Co(2+) as cofactor. It depends on Ni(2+) as a cofactor.

It carries out the reaction alpha-maltose 6'-phosphate + H2O = D-glucose 6-phosphate + D-glucose. It participates in glycan degradation; maltose degradation. Functionally, hydrolyzes a wide variety of 6-phospho-alpha-D-glucosides including maltose-6'P, trehalose-6P and the 6'-phosphorylated derivatives of the five linkage-isomeric alpha-D-glucosyl-D-fructoses: trehalulose-6'P, turanose-6'P, maltulose-6'P, leucrose-6'P, and palatinose-6'P. However, sucrose-6P is not a substrate for MalH, and this enzyme also fails to hydrolyze beta-O-linked phosphorylated disaccharides such as cellobiose-6'P and gentobiose-6'P. This Fusobacterium mortiferum protein is Maltose-6'-phosphate glucosidase (malH).